The sequence spans 638 residues: Bifunctional protein glk (638 aa).

The disordered stretch occupies residues 1–20 (MSTGVQTKAAPGAGQHADGP). The segment at 1–341 (MSTGVQTKAA…QLSNRAGGSS (341 aa)) is glucokinase. ATP is bound at residue 24–29 (ADIGGT). The HTH rpiR-type domain maps to 342–418 (SAVFERIRQM…LKLATGLTGT (77 aa)). Positions 342-638 (SAVFERIRQM…SHGAASSARD (297 aa)) are putative HTH-type transcriptional regulator. A DNA-binding region (H-T-H motif) is located at residues 378–397 (IVDIARKADVSQPTVIRFCR). Residues 462 to 601 (AIDLLNGARR…AVGVAIRRAV (140 aa)) form the SIS domain.

This sequence in the N-terminal section; belongs to the bacterial glucokinase family.

Its subcellular location is the cytoplasm. The enzyme catalyses D-glucose + ATP = D-glucose 6-phosphate + ADP + H(+). This chain is Bifunctional protein glk (glk), found in Paraburkholderia xenovorans (strain LB400).